The chain runs to 77 residues: Defensin-B6 (77 aa).

Residues 1-20 (MKTLFFLSVFIFLLLHLSPG) form the signal peptide. 3 disulfides stabilise this stretch: cysteine 43–cysteine 70, cysteine 50–cysteine 64, and cysteine 54–cysteine 71.

This sequence belongs to the beta-defensin family. As to expression, lowly expressed in spleen, kidney and lung.

Its subcellular location is the secreted. In terms of biological role, has antimicrobial activity. The polypeptide is Defensin-B6 (Ornithorhynchus anatinus (Duckbill platypus)).